Reading from the N-terminus, the 278-residue chain is MSSASFTTKALSVLAALTAASAPLVAASPAHALANARNVTGSSTTSDSIVRLHIGNTACTGTMITPTWAITARHCIPEGGIAGAAIGSSTLSQFQQVSQAILHPTADLALVELPNQASSNTVDLYGAHVQPGENGQAAGWGGYSAFGQNVAQQADVQIQRRVVNVPSPDRTAVLLEGTVSNGRLVPGDSGGPLYINGQLAGVLSMSTDVENDALDGTVGWYIPVAEHAEWIAYYTGKHIAPIAGAPAELVDATANPTFIPAPQPFTGSSIGGWALGSS.

Positions 1 to 32 are cleaved as a signal peptide; it reads MSSASFTTKALSVLAALTAASAPLVAASPAHA. The region spanning 33 to 236 is the Peptidase S1 domain; that stretch reads LANARNVTGS…HAEWIAYYTG (204 aa). Cysteine 59 and cysteine 75 are oxidised to a cystine. Active-site charge relay system residues include histidine 74, aspartate 123, and serine 189.

The protein belongs to the peptidase S1 family.

It localises to the secreted. In Corynebacterium glutamicum (strain ATCC 13032 / DSM 20300 / JCM 1318 / BCRC 11384 / CCUG 27702 / LMG 3730 / NBRC 12168 / NCIMB 10025 / NRRL B-2784 / 534), this protein is Putative peptidase Cgl1093.